A 220-amino-acid chain; its full sequence is Exodeoxyribonuclease 10 (220 aa).

The cofactor is Mg(2+).

Capable of degrading both single-strand and double-strand DNA with 3' to 5' polarity. Has higher affinity for ssDNA ends than for dsDNA. The sequence is that of Exodeoxyribonuclease 10 (exoX) from Escherichia coli O6:H1 (strain CFT073 / ATCC 700928 / UPEC).